The sequence spans 239 residues: Small ribosomal subunit protein uS2 (239 aa).

It belongs to the universal ribosomal protein uS2 family.

In Francisella tularensis subsp. tularensis (strain FSC 198), this protein is Small ribosomal subunit protein uS2.